A 213-amino-acid polypeptide reads, in one-letter code: GTP-binding protein YPTC4 (213 aa).

13–21 (GDTGVGKSC) lines the GTP pocket. Residues 35 to 43 (HDLTIGVEF) carry the Effector region motif. Residues 61-65 (DTAGQ), 119-122 (NKCD), and 149-151 (SAR) each bind GTP. Residues 194–213 (AGPQTVKPGEGGAAKSSSCC) form a disordered region. Residues Cys212 and Cys213 are each lipidated (S-geranylgeranyl cysteine).

The protein belongs to the small GTPase superfamily. Rab family.

The protein resides in the cell membrane. Its function is as follows. Protein transport. Probably involved in vesicular traffic. The sequence is that of GTP-binding protein YPTC4 (YPTC4) from Chlamydomonas reinhardtii (Chlamydomonas smithii).